A 181-amino-acid polypeptide reads, in one-letter code: Probable pyruvoyl-dependent arginine decarboxylase (181 aa).

The residue at position 43 (S43) is a Pyruvic acid (Ser).

Belongs to the PdaD family. Pyruvate serves as cofactor.

It catalyses the reaction L-arginine + H(+) = agmatine + CO2. The polypeptide is Probable pyruvoyl-dependent arginine decarboxylase (Prosthecochloris aestuarii (strain DSM 271 / SK 413)).